Here is a 577-residue protein sequence, read N- to C-terminus: MELAGFHCCSWTVILLSALLPTTWRPPAAAHFIHRADLLSNTQMERAPLAKLTLTVNQSTVTEQREMAVFYCNTNADNITIHWVSNNSLLVLNERMKLSADNKTLTILIVQREDSGSYLCEVQHGFEVQRSNTASLTVNYGPDPVSIKLDSGVAAGDVVEVMEGNTVNFRVEAQSSPVPAYAWYLPSDFIQPPTTGTFTIDAVSREHEGMYRCLVSNPVTNLSRLGVVKVQVLEKVTAPNIEFPTLALVENATSVTLTCKTSHQRVGVHWFLKGQPLRPSDRLTLSSQNRTLTIHGLQRDDIGPYECEVWNWGSQARSVPLKLTINYGPDQVEITQGPASGVVSTIEAMLNSSLTLYCRADSIPGARYQWTHEHSSKVLDGEQLSIEALRQEHQGIYSCTSSNDVTGLARSASVLVMVVGLQSSSMSPGAIAGIVIGILVAIALAIGLGYFLYSTKDRWTRRRSASDTTSSNTIPPTSVMQSTPESRHNKPMTVYDNTPKPEGEARGKKMWSLPRDSPEQFYEKKPPSAAPEGPRKPLPQIPKQPLMPPGPGRNEESNYEKLLNSNHSLYCKITPSA.

An N-terminal signal peptide occupies residues 1–30 (MELAGFHCCSWTVILLSALLPTTWRPPAAA). Residues 31-430 (HFIHRADLLS…LQSSSMSPGA (400 aa)) lie on the Extracellular side of the membrane. Ig-like C2-type domains follow at residues 48 to 137 (PLAK…ASLT), 142 to 223 (PDPV…TNLS), 239 to 324 (PNIE…LKLT), and 329 to 415 (PDQV…ASVL). Cys-72 and Cys-120 are joined by a disulfide. N-linked (GlcNAc...) asparagine glycans are attached at residues Asn-78 and Asn-102. Cystine bridges form between Cys-259–Cys-307 and Cys-358–Cys-399. N-linked (GlcNAc...) asparagine glycosylation is present at Asn-289. Residues 431–451 (IAGIVIGILVAIALAIGLGYF) form a helical membrane-spanning segment. Over 452–577 (LYSTKDRWTR…SLYCKITPSA (126 aa)) the chain is Cytoplasmic. Positions 461-568 (RRRSASDTTS…YEKLLNSNHS (108 aa)) are disordered. Over residues 474–484 (IPPTSVMQSTP) the composition is skewed to polar residues. Over residues 516 to 526 (DSPEQFYEKKP) the composition is skewed to basic and acidic residues. The segment covering 536–551 (KPLPQIPKQPLMPPGP) has biased composition (pro residues). Phosphotyrosine occurs at positions 559 and 570.

This sequence belongs to the immunoglobulin superfamily. CEA family. Interacts (via extracellular domain) with PTPRH (via extracellular domain); the interaction dephosphorylates CEACAM20. Interacts (phosphorylated form) with SYK (via SH2 domains); the interaction further enhances CEACAM20 phosphorylation. Phosphorylated on tyrosine residues by SYK, SRC and FYN in vitro. As to expression, strongly expressed in the small intestine and colon (at protein level). Minimal expression in other tissues (at protein level). Highly expressed in cecum, colon, ileum, jejunum, and testis, and also detected at lower levels in salivary gland and thymus.

The protein localises to the cell projection. The protein resides in the microvillus membrane. Its subcellular location is the apical cell membrane. In terms of biological role, together with the tyrosine-protein kinase SYK, enhances production of the cytokine CXCL8/IL-8 via the NFKB pathway and may thus have a role in the intestinal immune response. The protein is Cell adhesion molecule CEACAM20 of Mus musculus (Mouse).